The primary structure comprises 441 residues: tRNA modification GTPase MnmE (441 aa).

Residues arginine 24, glutamate 81, and lysine 121 each coordinate (6S)-5-formyl-5,6,7,8-tetrahydrofolate. Positions 218 to 366 (GMVVAIAGPP…LLRELTRFAA (149 aa)) constitute a TrmE-type G domain. GTP-binding positions include 228–233 (NVGKST), 247–253 (SPHAGTT), and 272–275 (DTAG). Mg(2+)-binding residues include serine 232 and threonine 253. Lysine 441 is a (6S)-5-formyl-5,6,7,8-tetrahydrofolate binding site.

It belongs to the TRAFAC class TrmE-Era-EngA-EngB-Septin-like GTPase superfamily. TrmE GTPase family. As to quaternary structure, homodimer. Heterotetramer of two MnmE and two MnmG subunits. K(+) is required as a cofactor.

The protein localises to the cytoplasm. In terms of biological role, exhibits a very high intrinsic GTPase hydrolysis rate. Involved in the addition of a carboxymethylaminomethyl (cmnm) group at the wobble position (U34) of certain tRNAs, forming tRNA-cmnm(5)s(2)U34. The sequence is that of tRNA modification GTPase MnmE from Rhodopseudomonas palustris (strain ATCC BAA-98 / CGA009).